The chain runs to 402 residues: Triose phosphate/phosphate translocator, chloroplastic (402 aa).

Residues 1–72 (MESRVLSRAT…KGASLLRPCP (72 aa)) constitute a chloroplast transit peptide. Residues 73–96 (ATAGGNDSAGEEKVAPVGFFSRYP) lie on the Chloroplast intermembrane side of the membrane. A helical membrane pass occupies residues 97–117 (ALTTGFFFFTWYFLNVIFNIL). At 118 to 129 (NKKIYNYFPYPY) the chain is on the lumenal side. The chain crosses the membrane as a helical span at residues 130–150 (FVSVIHLAVGVVYCLVSWTVG). Topologically, residues 151–207 (LPKRAPIDGNLLKLLIPVAVCHALGHVTSNVSFAAVAVSFTHTVKALEPFFNAAASQ) are chloroplast intermembrane. Residues 208–228 (FILGQSIPITLWLSLAPVVIG) form a helical membrane-spanning segment. The Lumenal portion of the chain corresponds to 229–272 (VSMASLTELSFNWLGFISAMISNISFTYRSIYSKKAMTDMDSTN). Residues 273-292 (IYAYISIIALIVCIPPALII) form a helical membrane-spanning segment. The Chloroplast intermembrane segment spans residues 293–370 (EGPTLLKTGF…IIFGNKISTQ (78 aa)). Residues 371–391 (TGIGTGIAIAGVALYSFIKAQ) traverse the membrane as a helical segment. The Lumenal portion of the chain corresponds to 392–402 (IEEEKRQAKAA).

It belongs to the TPT transporter family. TPT (TC 2.A.7.9) subfamily. As to quaternary structure, homodimer.

The protein localises to the plastid. The protein resides in the chloroplast membrane. Functionally, mediates the export of fixed carbons from the chloroplasts into the cytosol in the form of triose phosphates. In Pisum sativum (Garden pea), this protein is Triose phosphate/phosphate translocator, chloroplastic.